Reading from the N-terminus, the 54-residue chain is uncharacterized protein (54 aa).

A signal peptide spans 1-21; the sequence is MNSKQILSLSAFAMTIATAAA. Topologically, residues 22–29 are extracellular; that stretch reads GNWNAGDT. A helical transmembrane segment spans residues 30-50; it reads IALLIGIAMFFVLLLALLGWI. At 51–54 the chain is on the cytoplasmic side; the sequence is SRKK.

It localises to the membrane. This is an uncharacterized protein from Dictyostelium discoideum (Social amoeba).